A 422-amino-acid chain; its full sequence is MFDKTQTIADFDPDVWQAIVDEGVRQEEHIELIASENYTSPLVMVAQGSKLTNKYAEGYPSKRYYGGCEYVDKVEELAIERAKALFGADYANVQPHSGSQANSAVYAALCAPGDTVLGMSLDHGGHLTHGAKVNFSGKMYNAVQYGLNPETGLVDYEEIAALAREHKPKMIVAGFSAYSQVLDWQKFRDIADEVGAYLMVDMAHVAGLVAAGVYPSPVQIADVTTTTTHKTLRGPRGGIILAKANPEIEKKLNSAVFPGGQGGPLMHVIAGKAISFKEAMSDEYKAYQQRVVDNAKTMAATFIKRGFKIVSGGTENHLMLVDLIGKDYSGKDADAALGAANITVNKNAVPNDPRSPFVTSGLRVGTPAITTRGFGETEVVDLTNWMCDVLESLEAGNSEAVIADVKAKVLDVCGKFPVYGSN.

Residues Leu121 and 125–127 (GHL) contribute to the (6S)-5,6,7,8-tetrahydrofolate site. The residue at position 230 (Lys230) is an N6-(pyridoxal phosphate)lysine. A (6S)-5,6,7,8-tetrahydrofolate-binding site is contributed by 355–357 (SPF).

It belongs to the SHMT family. Homodimer. Pyridoxal 5'-phosphate serves as cofactor.

It localises to the cytoplasm. It catalyses the reaction (6R)-5,10-methylene-5,6,7,8-tetrahydrofolate + glycine + H2O = (6S)-5,6,7,8-tetrahydrofolate + L-serine. It participates in one-carbon metabolism; tetrahydrofolate interconversion. Its pathway is amino-acid biosynthesis; glycine biosynthesis; glycine from L-serine: step 1/1. In terms of biological role, catalyzes the reversible interconversion of serine and glycine with tetrahydrofolate (THF) serving as the one-carbon carrier. This reaction serves as the major source of one-carbon groups required for the biosynthesis of purines, thymidylate, methionine, and other important biomolecules. Also exhibits THF-independent aldolase activity toward beta-hydroxyamino acids, producing glycine and aldehydes, via a retro-aldol mechanism. The sequence is that of Serine hydroxymethyltransferase from Teredinibacter turnerae (strain ATCC 39867 / T7901).